The sequence spans 713 residues: Serine/threonine-protein kinase SSN3 (713 aa).

One can recognise a Protein kinase domain in the interval 66 to 484 (YTILGFLSSG…ANQALEHAWF (419 aa)). 72–80 (LSSGTYGRV) lines the ATP pocket. The span at 104–120 (NAGTGSGTATVGSGAST) shows a compositional bias: low complexity. Residues 104–188 (NAGTGSGTAT…GGSDNTLQLS (85 aa)) form a disordered region. Residues 129 to 142 (QQHQLLDSPSSSLH) are compositionally biased toward polar residues. The span at 158–175 (GTPSASPSLSASLGTSTA) shows a compositional bias: low complexity. Lys201 serves as a coordination point for ATP. Asp304 functions as the Proton acceptor in the catalytic mechanism. Positions 657–672 (SNPATVRSSHSIGSTE) are enriched in polar residues. The segment at 657–713 (SNPATVRSSHSIGSTESITPTTSSQPIPAQPSSAPLARTTNLVATATRNQQRKRQRN) is disordered. Positions 673-691 (SITPTTSSQPIPAQPSSAP) are enriched in low complexity. Positions 694–705 (RTTNLVATATRN) are enriched in polar residues.

Belongs to the protein kinase superfamily. CMGC Ser/Thr protein kinase family. CDC2/CDKX subfamily. As to quaternary structure, component of the srb8-11 complex, a regulatory module of the Mediator complex. The cofactor is Mg(2+).

The protein localises to the nucleus. The catalysed reaction is L-seryl-[protein] + ATP = O-phospho-L-seryl-[protein] + ADP + H(+). It carries out the reaction L-threonyl-[protein] + ATP = O-phospho-L-threonyl-[protein] + ADP + H(+). The enzyme catalyses [DNA-directed RNA polymerase] + ATP = phospho-[DNA-directed RNA polymerase] + ADP + H(+). Functionally, component of the srb8-11 complex. The srb8-11 complex is a regulatory module of the Mediator complex which is itself dependent transcription. The srb8-11 complex may be involved in the transcriptional repression of a subset of genes regulated by Mediator. It may inhibit the association of the Mediator complex with RNA polymerase II to form the holoenzyme complex. The srb8-11 complex phosphorylates the C-terminal domain (CTD) of the largest subunit of RNA polymerase II. The chain is Serine/threonine-protein kinase SSN3 (SSN3) from Mycosarcoma maydis (Corn smut fungus).